The primary structure comprises 445 residues: Ubiquitin carboxyl-terminal hydrolase 11 (445 aa).

The USP domain maps to 1–412 (NSARADLCVA…AAYVLFYQRQ (412 aa)). The disordered stretch occupies residues 127 to 194 (RPSSDDEDDG…GPSHWPQRAR (68 aa)). Serine 130 carries the phosphoserine modification. A compositionally biased stretch (acidic residues) spans 131–140 (DDEDDGDEKD). The active-site Nucleophile is the histidine 362. Residue histidine 370 is the Proton acceptor of the active site. The disordered stretch occupies residues 416–445 (RRLQPQPSSSDPPASPACGSPPNSEFMDVN). Low complexity predominate over residues 420–439 (PQPSSSDPPASPACGSPPNS). A Phosphoserine modification is found at serine 430.

This sequence belongs to the peptidase C19 family. Monomer. Interacts with RANBP9/RANBPM. Interacts with BRCA2. Interacts with CHUK/IKKA. Interacts with NFKBIA. Associated component of the Polycomb group (PcG) multiprotein PRC1-like complex.

It localises to the nucleus. Its subcellular location is the cytoplasm. The protein localises to the chromosome. The catalysed reaction is Thiol-dependent hydrolysis of ester, thioester, amide, peptide and isopeptide bonds formed by the C-terminal Gly of ubiquitin (a 76-residue protein attached to proteins as an intracellular targeting signal).. Protease that can remove conjugated ubiquitin from target proteins and polyubiquitin chains. Inhibits the degradation of target proteins by the proteasome. Cleaves preferentially 'Lys-6' and 'Lys-63'-linked ubiquitin chains. Has lower activity with 'Lys-11' and 'Lys-33'-linked ubiquitin chains, and extremely low activity with 'Lys-27', 'Lys-29' and 'Lys-48'-linked ubiquitin chains (in vitro). Plays a role in the regulation of pathways leading to NF-kappa-B activation. Plays a role in the regulation of DNA repair after double-stranded DNA breaks. Acts as a chromatin regulator via its association with the Polycomb group (PcG) multiprotein PRC1-like complex; may act by deubiquitinating components of the PRC1-like complex. Promotes cell proliferation by deubiquitinating phosphorylated E2F1. The sequence is that of Ubiquitin carboxyl-terminal hydrolase 11 (USP11) from Canis lupus familiaris (Dog).